The following is a 683-amino-acid chain: Receptor-like serine/threonine-protein kinase At2g45590 (683 aa).

The interval 1–21 (MPSRLSPPDIPPLQPTPTVSD) is disordered. The Extracellular segment spans residues 1–30 (MPSRLSPPDIPPLQPTPTVSDGHHRFQTLP). The chain crosses the membrane as a helical span at residues 31 to 51 (LIIAGSLTLTGVLLILVTLLI). At 52–683 (YRRLYRNRTA…FPFKSRKKAR (632 aa)) the chain is on the cytoplasmic side. In terms of domain architecture, Protein kinase spans 92 to 664 (FSESTHLGHG…GVSEPPHLPF (573 aa)). ATP contacts are provided by residues 98–106 (LGHGGFGSV) and lysine 121. Catalysis depends on aspartate 223, which acts as the Proton acceptor. The disordered stretch occupies residues 406-436 (ERPSNNKEWINNGDGSSSVSKKKKKEKKRKP). Residues 411 to 424 (NKEWINNGDGSSSV) show a composition bias toward polar residues. Basic residues predominate over residues 425–436 (SKKKKKEKKRKP).

This sequence belongs to the protein kinase superfamily. Ser/Thr protein kinase family.

It localises to the cell membrane. It catalyses the reaction L-seryl-[protein] + ATP = O-phospho-L-seryl-[protein] + ADP + H(+). The enzyme catalyses L-threonyl-[protein] + ATP = O-phospho-L-threonyl-[protein] + ADP + H(+). The sequence is that of Receptor-like serine/threonine-protein kinase At2g45590 from Arabidopsis thaliana (Mouse-ear cress).